The chain runs to 536 residues: Cytochrome P450 monooxygenase macC (536 aa).

The helical transmembrane segment at 2–22 (ALLYITTAALALLLLFLRAVF) threads the bilayer. Heme is bound at residue cysteine 448.

The protein belongs to the cytochrome P450 family. Heme serves as cofactor.

The protein localises to the membrane. It participates in secondary metabolite biosynthesis; terpenoid biosynthesis. Functionally, cytochrome P450 monooxygenase; part of the gene cluster that mediates the biosynthesis of macrophorins, isoprenoid epoxycyclohexenones containing cyclized drimane moieties. The first step of the pathway is the synthesis of 6-methylsalicylic acid (6-MSA) by the polyketide synthase macA. 6-MSA is then converted to m-cresol by the decarboxylase macB. The cytochrome P450 monooxygenase macC then catalyzes the oxidation of m-cresol to toluquinol. Epoxidation of toluquinol is then performed by the short chain dehydrogenase macD, with the help of macE, and a further prenylation by macG leads to 7-deacetoxyyanuthone A. The next step is the hydroxylation of C-22 of 7-deacetoxyyanuthone A by the cytochrome P450 monooxygenase macH to yield 22-deacetylyanuthone A. O-Mevalon transferase macI then attaches mevalon to the hydroxyl group of 22-deacetylyanuthone A to produce yanuthone E. The terpene cyclase macJ catalyzes the cyclization of 22-deacetylyanuthone A to macrophorin A. MacJ is also able to catalyze cyclization of yanuthone E and 7-deacetoxyyanuthone A to their corresponding macrophorins. The macJ products can be further modified by macH and macJ, as well as by the FAD-dependent monooxygenase macF, to produce additional macrophorins, including 4'-oxomacrophorin A, 4'-oxomacrophorin D and 4'-oxomacrophorin E. The polypeptide is Cytochrome P450 monooxygenase macC (Penicillium terrestre).